A 548-amino-acid polypeptide reads, in one-letter code: ATP synthase subunit alpha, mitochondrial (548 aa).

209–216 (GDRQTGKT) provides a ligand contact to ATP.

This sequence belongs to the ATPase alpha/beta chains family. In terms of assembly, F-type ATPases have 2 components, CF(1) - the catalytic core - and CF(0) - the membrane proton channel. CF(1) has five subunits: alpha(3), beta(3), gamma(1), delta(1), epsilon(1). CF(0) has three main subunits: a, b and c.

The protein localises to the mitochondrion. The protein resides in the mitochondrion inner membrane. Functionally, mitochondrial membrane ATP synthase (F(1)F(0) ATP synthase or Complex V) produces ATP from ADP in the presence of a proton gradient across the membrane which is generated by electron transport complexes of the respiratory chain. F-type ATPases consist of two structural domains, F(1) - containing the extramembraneous catalytic core, and F(0) - containing the membrane proton channel, linked together by a central stalk and a peripheral stalk. During catalysis, ATP synthesis in the catalytic domain of F(1) is coupled via a rotary mechanism of the central stalk subunits to proton translocation. Subunits alpha and beta form the catalytic core in F(1). Rotation of the central stalk against the surrounding alpha(3)beta(3) subunits leads to hydrolysis of ATP in three separate catalytic sites on the beta subunits. Subunit alpha does not bear the catalytic high-affinity ATP-binding sites. This is ATP synthase subunit alpha, mitochondrial (ATP1) from Kluyveromyces lactis (strain ATCC 8585 / CBS 2359 / DSM 70799 / NBRC 1267 / NRRL Y-1140 / WM37) (Yeast).